Here is a 212-residue protein sequence, read N- to C-terminus: Imidazole glycerol phosphate synthase subunit HisH (212 aa).

In terms of domain architecture, Glutamine amidotransferase type-1 spans 3-212; it reads TVAVIDYGMG…QNFIAWDGRW (210 aa). Catalysis depends on cysteine 81, which acts as the Nucleophile. Active-site residues include histidine 190 and glutamate 192.

As to quaternary structure, heterodimer of HisH and HisF.

The protein localises to the cytoplasm. It carries out the reaction 5-[(5-phospho-1-deoxy-D-ribulos-1-ylimino)methylamino]-1-(5-phospho-beta-D-ribosyl)imidazole-4-carboxamide + L-glutamine = D-erythro-1-(imidazol-4-yl)glycerol 3-phosphate + 5-amino-1-(5-phospho-beta-D-ribosyl)imidazole-4-carboxamide + L-glutamate + H(+). The catalysed reaction is L-glutamine + H2O = L-glutamate + NH4(+). It participates in amino-acid biosynthesis; L-histidine biosynthesis; L-histidine from 5-phospho-alpha-D-ribose 1-diphosphate: step 5/9. IGPS catalyzes the conversion of PRFAR and glutamine to IGP, AICAR and glutamate. The HisH subunit catalyzes the hydrolysis of glutamine to glutamate and ammonia as part of the synthesis of IGP and AICAR. The resulting ammonia molecule is channeled to the active site of HisF. This Pseudomonas putida (strain ATCC 47054 / DSM 6125 / CFBP 8728 / NCIMB 11950 / KT2440) protein is Imidazole glycerol phosphate synthase subunit HisH.